Here is a 219-residue protein sequence, read N- to C-terminus: 2-hydroxy-3-keto-5-methylthiopentenyl-1-phosphate phosphatase (219 aa).

The protein belongs to the HAD-like hydrolase superfamily. MtnX family.

It catalyses the reaction 2-hydroxy-5-methylsulfanyl-3-oxopent-1-enyl phosphate + H2O = 1,2-dihydroxy-5-(methylsulfanyl)pent-1-en-3-one + phosphate. It participates in amino-acid biosynthesis; L-methionine biosynthesis via salvage pathway; L-methionine from S-methyl-5-thio-alpha-D-ribose 1-phosphate: step 4/6. Dephosphorylates 2-hydroxy-3-keto-5-methylthiopentenyl-1-phosphate (HK-MTPenyl-1-P) yielding 1,2-dihydroxy-3-keto-5-methylthiopentene (DHK-MTPene). This chain is 2-hydroxy-3-keto-5-methylthiopentenyl-1-phosphate phosphatase, found in Bacillus thuringiensis subsp. konkukian (strain 97-27).